The following is a 393-amino-acid chain: Putative odorant receptor 69a, isoform A (393 aa).

Over 1 to 39 (MQLHDHMKYIDLGCKMACIPRYQWKGRPTERQFYASEQR) the chain is Cytoplasmic. Residues 40–60 (IVFLLGTICQIFQITGVLIYW) form a helical membrane-spanning segment. The Extracellular portion of the chain corresponds to 61-76 (YCNGRLATETGTFVAQ). Residues 77–97 (LSEMCSSFCLTFVGFCNVYAI) form a helical membrane-spanning segment. Over 98 to 139 (STNRNQIETLLEELHQIYPRYRKNHYRCQHYFDMAMTIMRIE) the chain is Cytoplasmic. Residues 140 to 160 (FLFYMILYVYYNSAPLWVLLW) form a helical membrane-spanning segment. The Extracellular portion of the chain corresponds to 161–189 (EHLHEEYDLSFKTQTNTWFPWKVHGSALG). The helical transmembrane segment at 190–210 (FGMAVLSITVGSFVGVGFSIV) threads the bilayer. Topologically, residues 211 to 269 (TQNLICLLTFQLKLHYDGISSQLVSLDCRRPGAHKELSILIAHHSRILQLGDQVNDIMN) are cytoplasmic. A helical transmembrane segment spans residues 270–290 (FVFGSSLVGATIAICMSSVSI). Over 291-304 (MLLDLASAFKYASG) the chain is Extracellular. The helical transmembrane segment at 305–325 (LVAFVLYNFVICYMGTEVTLA) threads the bilayer. Over 326-365 (SGKVLPAAFYNNWYEGDLVYRRMLLILMMRATKPYMWKTY) the chain is Cytoplasmic. Residues 366 to 386 (KLAPVSITTYMATLKFSYQMF) form a helical membrane-spanning segment. Over 387–393 (TCVRSLK) the chain is Extracellular.

The protein belongs to the insect chemoreceptor superfamily. Heteromeric odorant receptor channel (TC 1.A.69) family. Or49a subfamily. As to quaternary structure, interacts with Orco. Complexes exist early in the endomembrane system in olfactory sensory neurons (OSNs), coupling these complexes to the conserved ciliary trafficking pathway. In terms of tissue distribution, expressed in olfactory sensory neurons in the antenna.

The protein resides in the cell membrane. Odorant receptor which mediates acceptance or avoidance behavior, depending on its substrates. The odorant receptor repertoire encodes a large collection of odor stimuli that vary widely in identity, intensity, and duration. May form a complex with Orco to form odorant-sensing units, providing sensitive and prolonged odorant signaling and calcium permeability. The polypeptide is Putative odorant receptor 69a, isoform A (Or69a) (Drosophila melanogaster (Fruit fly)).